Consider the following 311-residue polypeptide: Solute carrier family 25 member 48 (311 aa).

Solcar repeat units follow at residues 3–86 (NFQL…TQRF), 100–205 (PHVL…LSDW), and 214–301 (PSPC…SLQA). Helical transmembrane passes span 9–29 (FVAG…LDTV), 61–81 (GMSF…GVFS), 107–127 (LLAS…VDLI), 193–213 (CLYF…ACAG), 217–237 (CAVW…ATPM), and 277–295 (ITVN…FLGY).

It belongs to the mitochondrial carrier (TC 2.A.29) family.

The protein resides in the mitochondrion inner membrane. The sequence is that of Solute carrier family 25 member 48 (SLC25A48) from Bos taurus (Bovine).